Reading from the N-terminus, the 574-residue chain is Man(5)GlcNAc(2)-PP-dolichol translocation protein RFT1 (574 aa).

At 1-24 (MAKKNSQLPSTSEQILERSTTGAT) the chain is on the lumenal side. The chain crosses the membrane as a helical span at residues 25–45 (FLMMGQLFTKLVTFILNNLLI). The Cytoplasmic portion of the chain corresponds to 46–48 (RFL). The helical transmembrane segment at 49-69 (SPRIFGITAFLEFIQGTVLFF) threads the bilayer. The Lumenal portion of the chain corresponds to 70–110 (SRDAIRLSTLRISDSGNGIIDDDDEEEYQETHYKSKVLQTA). Residues 111–131 (VNFAYIPFWIGFPLSIGLIAW) traverse the membrane as a helical segment. Over 132–148 (QYRNINAYFITLPFFRW) the chain is Cytoplasmic. The chain crosses the membrane as a helical span at residues 149-169 (SIFLIWLSIIVELLSEPFFIV). The Lumenal segment spans residues 170 to 181 (NQFMLNYAARSR). Residues 182 to 202 (FESIAVTTGCIVNFIVVYAVQ) form a helical membrane-spanning segment. Residues 203–218 (QSRYPMGVVTSDIDKE) are Cytoplasmic-facing. The helical transmembrane segment at 219–239 (GIAILAFALGKLAHSITLLAC) threads the bilayer. The Lumenal segment spans residues 240–319 (YYWDYLKNFK…INSLCTVEEQ (80 aa)). The chain crosses the membrane as a helical span at residues 320-340 (GIYALLSNYGSLLTRLLFAPI). The Cytoplasmic segment spans residues 341 to 372 (EESLRLFLARLLSSHNPKNLKLSIEVLVNLTR). A helical transmembrane segment spans residues 373–393 (FYIYLSLMIIVFGPANSSFLL). The Lumenal segment spans residues 394–413 (QFLIGSKWSTTSVLDTIRVY). The chain crosses the membrane as a helical span at residues 414–434 (CFYIPFLSLNGIFEAFFQSVA). The Cytoplasmic portion of the chain corresponds to 435 to 443 (TGDQILKHS). Residues 444–464 (YFMMAFSGIFLLNSWLLIEKL) form a helical membrane-spanning segment. The Lumenal portion of the chain corresponds to 465-469 (KLSIE). The helical transmembrane segment at 470-490 (GLILSNIINMVLRILYCGVFL) threads the bilayer. Residues 491-509 (NKFHRELFTDSSFFFNFKD) lie on the Cytoplasmic side of the membrane. Residues 510–530 (FKTVIIAGSTICLLDWWFIGY) form a helical membrane-spanning segment. The Lumenal portion of the chain corresponds to 531–532 (VK). The helical transmembrane segment at 533–553 (NLQQFVVNVLFAMGLLALILV) threads the bilayer. The Cytoplasmic portion of the chain corresponds to 554-574 (KERQTIQSFINKRAVSNSKDV).

Belongs to the RFT1 family.

The protein resides in the endoplasmic reticulum membrane. It participates in protein modification; protein glycosylation. In terms of biological role, intramembrane glycolipid transporter that operates in the biosynthetic pathway of dolichol-linked oligosaccharides, the glycan precursors employed in protein asparagine (N)-glycosylation. The sequential addition of sugars to dolichol pyrophosphate produces dolichol-linked oligosaccharides containing fourteen sugars, including two GlcNAcs, nine mannoses and three glucoses. Once assembled, the oligosaccharide is transferred from the lipid to nascent proteins by oligosaccharyltransferases. The assembly of dolichol-linked oligosaccharides begins on the cytosolic side of the endoplasmic reticulum membrane and finishes in its lumen. RFT1 could mediate the translocation of the cytosolically oriented intermediate DolPP-GlcNAc2Man5, produced by ALG11, into the ER lumen where dolichol-linked oligosaccharides assembly continues. However, the intramembrane lipid transporter activity could not be confirmed in vitro. This is Man(5)GlcNAc(2)-PP-dolichol translocation protein RFT1 from Saccharomyces cerevisiae (strain ATCC 204508 / S288c) (Baker's yeast).